Consider the following 134-residue polypeptide: Pro-opiomelanocortin (134 aa).

Ser-1 is modified (N-acetylserine). Valine amide is present on Val-13. Ser-31 carries the phosphoserine modification. 2 stretches are compositionally biased toward basic and acidic residues: residues 43–52 (LARERPEPAR) and 79–104 (SAEKKDEGPYKMEHFRWGSPAKDKRY). The tract at residues 43-107 (LARERPEPAR…PAKDKRYGGF (65 aa)) is disordered.

It belongs to the POMC family. Post-translationally, specific enzymatic cleavages at paired basic residues yield the different active peptides. In terms of tissue distribution, ACTH and MSH are produced by the pituitary gland.

It localises to the secreted. Its function is as follows. Stimulates the adrenal glands to release cortisol. In terms of biological role, anorexigenic peptide. Increases the pigmentation of skin by increasing melanin production in melanocytes. Increases the pigmentation of skin by increasing melanin production in melanocytes. Functionally, endogenous orexigenic opiate. Its function is as follows. Endogenous opiate. This chain is Pro-opiomelanocortin (POMC), found in Loxodonta africana (African elephant).